A 241-amino-acid polypeptide reads, in one-letter code: Platelet-derived growth factor subunit B (241 aa).

A signal peptide spans 1–20; that stretch reads MNRCWALFLSLCCYLRLVSA. Positions 21–81 are cleaved as a propeptide — removed in mature form; the sequence is EGDPIPEELY…ELESLARGRR (61 aa). Asn63 is a glycosylation site (N-linked (GlcNAc...) asparagine). 3 disulfides stabilise this stretch: Cys97-Cys141, Cys130-Cys178, and Cys134-Cys180. Positions 191 to 241 are cleaved as a propeptide — removed in mature form; it reads RSPGGSQEQRAKTPQTRVTIRTVRVRRPPKGKHRKFKHTHDKTALKETLGA. Basic residues predominate over residues 216–230; that stretch reads RRPPKGKHRKFKHTH. The interval 216–241 is disordered; that stretch reads RRPPKGKHRKFKHTHDKTALKETLGA.

The protein belongs to the PDGF/VEGF growth factor family. Antiparallel homodimer; disulfide-linked. Antiparallel heterodimer with PDGFA; disulfide-linked. The PDGFB homodimer interacts with PDGFRA and PDGFRB homodimers, and with heterodimers formed by PDGFRA and PDGFRB. The heterodimer composed of PDGFA and PDGFB interacts with PDGFRB homodimers, and with heterodimers formed by PDGFRA and PDGFRB. Interacts with XLKD1. Interacts with LRP1. Interacts with SORL1 (via the N-terminal ectodomain). Interacts with CD82; this interaction inhibits PDGFB-mediated signaling pathway. Expressed at high levels in the heart, brain (sustantia nigra), placenta and fetal kidney. Expressed at moderate levels in the brain (hippocampus), skeletal muscle, kidney and lung.

Its subcellular location is the secreted. In terms of biological role, growth factor that plays an essential role in the regulation of embryonic development, cell proliferation, cell migration, survival and chemotaxis. Potent mitogen for cells of mesenchymal origin. Required for normal proliferation and recruitment of pericytes and vascular smooth muscle cells in the central nervous system, skin, lung, heart and placenta. Required for normal blood vessel development, and for normal development of kidney glomeruli. Plays an important role in wound healing. Signaling is modulated by the formation of heterodimers with PDGFA. In Homo sapiens (Human), this protein is Platelet-derived growth factor subunit B (PDGFB).